Reading from the N-terminus, the 134-residue chain is Profilin-5 (134 aa).

The protein belongs to the profilin family. In terms of assembly, occurs in many kinds of cells as a complex with monomeric actin in a 1:1 ratio. As to expression, specifically expressed in mature pollen grains. Expressed in germinating pollen grains. Expressed in growing pollen tubes (at protein level).

The protein resides in the cytoplasm. It is found in the cytoskeleton. In terms of biological role, binds to actin monomers and regulates the organization of the actin cytoskeleton. At high concentrations, profilin prevents the polymerization of actin, whereas it enhances it at low concentrations. At low concentrations, associates with the poly-proline motif of formins to enhance actin filament elongation rate. Acts redundantly with PRF4 to regulate apical actin polymerization at the tip of pollen tube and control polarized pollen tube growth. Functions probably by favoring formin-mediated actin polymerization at pollen tube tips. This Arabidopsis thaliana (Mouse-ear cress) protein is Profilin-5.